The sequence spans 207 residues: High mobility group protein B2 (207 aa).

DNA-binding regions (HMG box) lie at residues 9–79 and 95–163; these read PRGK…KNYV and PKRP…AAYR. 2 positions are modified to cysteine sulfonic acid (-SO3H); alternate: cysteine 23 and cysteine 45. Residues cysteine 23 and cysteine 45 are joined by a disulfide bond. A compositionally biased stretch (basic and acidic residues) spans 52–76; the sequence is MSSKEKGKFEEMAKGDKARYDREMK. The disordered stretch occupies residues 52 to 102; sequence MSSKEKGKFEEMAKGDKARYDREMKNYVPPKGEKKGKKKDPNAPKRPPSAF. Cysteine 106 carries the cysteine sulfonic acid (-SO3H) modification. The segment covering 162–172 has biased composition (basic and acidic residues); sequence YRAKSKSDAGK. Positions 162–207 are disordered; that stretch reads YRAKSKSDAGKKGPGRPAGSKKKAEPEEEEEEEEDEEEEEEEEDEE. A compositionally biased stretch (acidic residues) spans 187–207; the sequence is PEEEEEEEEDEEEEEEEEDEE.

The protein belongs to the HMGB family. Post-translationally, reduction/oxidation of cysteine residues Cys-23, Cys-45 and Cys-106 and a possible intramolecular disulfide bond involving Cys-23 and Cys-45 give rise to different redox forms with specific functional activities in various cellular compartments: 1- fully reduced HMGB2 (HMGB2C23hC45hC106h), 2- disulfide HMGB2 (HMGB2C23-C45C106h) and 3- sulfonyl HMGB2 (HMGB2C23soC45soC106so).

It localises to the nucleus. It is found in the chromosome. The protein localises to the cytoplasm. The protein resides in the secreted. Multifunctional protein with various roles in different cellular compartments. May act in a redox sensitive manner. Associates with chromatin and binds DNA with a preference to non-canonical DNA structures such as single-stranded DNA. Can bent DNA and enhance DNA flexibility by looping thus providing a mechanism to promote activities on various gene promoters. Proposed to be involved in the innate immune response to nucleic acids by acting as a cytoplasmic promiscuous immunogenic DNA/RNA sensor. Involved in inflammatory response to antigenic stimulus coupled with pro-inflammatory activity. This chain is High mobility group protein B2 (HMGB2), found in Gallus gallus (Chicken).